Consider the following 202-residue polypeptide: Dual-action ribosomal maturation protein DarP (202 aa).

The span at 1 to 13 shows a compositional bias: low complexity; that stretch reads MPPMTRNTRNNPN. The segment at 1–39 is disordered; the sequence is MPPMTRNTRNNPNGRFPGAFAPEDEDDLPKSKSQRKRDM.

The protein belongs to the DarP family.

Its subcellular location is the cytoplasm. Functionally, member of a network of 50S ribosomal subunit biogenesis factors which assembles along the 30S-50S interface, preventing incorrect 23S rRNA structures from forming. Promotes peptidyl transferase center (PTC) maturation. The protein is Dual-action ribosomal maturation protein DarP of Cupriavidus metallidurans (strain ATCC 43123 / DSM 2839 / NBRC 102507 / CH34) (Ralstonia metallidurans).